Reading from the N-terminus, the 796-residue chain is RNA cytosine-C(5)-methyltransferase NSUN2 (796 aa).

The segment covering 1–11 has biased composition (basic residues); the sequence is MGRRARDRRRQ. The disordered stretch occupies residues 1 to 36; sequence MGRRARDRRRQLQPQQRRERSGGGGGGGDDQAGWAG. Positions 22-36 are enriched in gly residues; sequence GGGGGGGDDQAGWAG. Residues 184 to 190, D215, D242, and D268 each bind S-adenosyl-L-methionine; that span reads CAAPGSK. C321 (nucleophile) is an active-site residue. 2 disordered regions span residues 435–501 and 707–796; these read WNKR…CGPP and RKEG…NVKD. Composition is skewed to basic and acidic residues over residues 467–483, 708–721, and 733–746; these read ATEK…KKVQ, KEGE…EEVQ, and VEDK…KMEA. A compositionally biased stretch (polar residues) spans 774-783; it reads CSKNTNSHIN. The segment covering 784 to 796 has biased composition (basic and acidic residues); the sequence is QESKDMNTNNVKD.

Belongs to the class I-like SAM-binding methyltransferase superfamily. RsmB/NOP family. TRM4 subfamily.

It is found in the nucleus. It localises to the nucleolus. The protein resides in the cytoplasm. The protein localises to the mitochondrion. Its subcellular location is the cytoskeleton. It is found in the spindle. It localises to the secreted. The protein resides in the extracellular exosome. The catalysed reaction is cytidine(48) in tRNA + S-adenosyl-L-methionine = 5-methylcytidine(48) in tRNA + S-adenosyl-L-homocysteine + H(+). It catalyses the reaction cytidine(49) in tRNA + S-adenosyl-L-methionine = 5-methylcytidine(49) in tRNA + S-adenosyl-L-homocysteine + H(+). It carries out the reaction cytidine(50) in tRNA + S-adenosyl-L-methionine = 5-methylcytidine(50) in tRNA + S-adenosyl-L-homocysteine + H(+). The enzyme catalyses cytidine(34) in tRNA precursor + S-adenosyl-L-methionine = 5-methylcytidine(34) in tRNA precursor + S-adenosyl-L-homocysteine + H(+). The catalysed reaction is a cytidine in mRNA + S-adenosyl-L-methionine = a 5-methylcytidine in mRNA + S-adenosyl-L-homocysteine + H(+). RNA cytosine C(5)-methyltransferase that methylates cytosine to 5-methylcytosine (m5C) in various RNAs, such as tRNAs, mRNAs and some long non-coding RNAs (lncRNAs). Involved in various processes, such as epidermal stem cell differentiation, testis differentiation and maternal to zygotic transition during early development: acts by increasing protein synthesis; cytosine C(5)-methylation promoting tRNA stability and preventing mRNA decay. Methylates cytosine to 5-methylcytosine (m5C) at positions 34 and 48 of intron-containing tRNA(Leu)(CAA) precursors, and at positions 48, 49 and 50 of tRNA(Gly)(GCC) precursors. tRNA methylation is required generation of RNA fragments derived from tRNAs (tRFs). Also mediates C(5)-methylation of mitochondrial tRNAs. Catalyzes cytosine C(5)-methylation of mRNAs, leading to stabilize them and prevent mRNA decay. Cytosine C(5)-methylation of mRNAs also regulates mRNA export. Also mediates cytosine C(5)-methylation of non-coding RNAs, such as vault RNAs (vtRNAs), promoting their processing into regulatory small RNAs. Required for proper spindle assembly and chromosome segregation, independently of its methyltransferase activity. In Gallus gallus (Chicken), this protein is RNA cytosine-C(5)-methyltransferase NSUN2.